The sequence spans 591 residues: Protein misato homolog 1 (591 aa).

This sequence belongs to the misato family.

It is found in the mitochondrion outer membrane. Its subcellular location is the cytoplasm. Involved in the regulation of mitochondrial distribution and morphology. Required for mitochondrial fusion and mitochondrial network formation. The sequence is that of Protein misato homolog 1 (msto1) from Danio rerio (Zebrafish).